The following is a 374-amino-acid chain: DNA replication and repair protein RecF (374 aa).

30-37 serves as a coordination point for ATP; sequence GENAQGKT.

It belongs to the RecF family.

The protein localises to the cytoplasm. Functionally, the RecF protein is involved in DNA metabolism; it is required for DNA replication and normal SOS inducibility. RecF binds preferentially to single-stranded, linear DNA. It also seems to bind ATP. The polypeptide is DNA replication and repair protein RecF (Lactiplantibacillus plantarum (strain ATCC BAA-793 / NCIMB 8826 / WCFS1) (Lactobacillus plantarum)).